A 119-amino-acid polypeptide reads, in one-letter code: Fluoride-specific ion channel FluC 2 (119 aa).

Residues 46-66 (FALGLLTFAGVTGDAALLVGV) form a helical membrane-spanning segment. Na(+)-binding residues include Gly70 and Thr73. The helical transmembrane segment at 96–116 (LNAVGNLACALVGIGLAWGIV) threads the bilayer.

The protein belongs to the fluoride channel Fluc/FEX (TC 1.A.43) family.

Its subcellular location is the cell membrane. The catalysed reaction is fluoride(in) = fluoride(out). Na(+) is not transported, but it plays an essential structural role and its presence is essential for fluoride channel function. Fluoride-specific ion channel. Important for reducing fluoride concentration in the cell, thus reducing its toxicity. The chain is Fluoride-specific ion channel FluC 2 from Haloarcula marismortui (strain ATCC 43049 / DSM 3752 / JCM 8966 / VKM B-1809) (Halobacterium marismortui).